The primary structure comprises 407 residues: DNA-directed RNA polymerase subunit Rpo1C (407 aa).

This sequence belongs to the RNA polymerase beta' chain family. As to quaternary structure, part of the RNA polymerase complex.

The protein resides in the cytoplasm. The enzyme catalyses RNA(n) + a ribonucleoside 5'-triphosphate = RNA(n+1) + diphosphate. DNA-dependent RNA polymerase (RNAP) catalyzes the transcription of DNA into RNA using the four ribonucleoside triphosphates as substrates. Forms part of the jaw domain. The sequence is that of DNA-directed RNA polymerase subunit Rpo1C from Aeropyrum pernix (strain ATCC 700893 / DSM 11879 / JCM 9820 / NBRC 100138 / K1).